We begin with the raw amino-acid sequence, 80 residues long: Exodeoxyribonuclease 7 small subunit (80 aa).

The protein belongs to the XseB family. As to quaternary structure, heterooligomer composed of large and small subunits.

It is found in the cytoplasm. It carries out the reaction Exonucleolytic cleavage in either 5'- to 3'- or 3'- to 5'-direction to yield nucleoside 5'-phosphates.. Bidirectionally degrades single-stranded DNA into large acid-insoluble oligonucleotides, which are then degraded further into small acid-soluble oligonucleotides. The polypeptide is Exodeoxyribonuclease 7 small subunit (Maridesulfovibrio salexigens (strain ATCC 14822 / DSM 2638 / NCIMB 8403 / VKM B-1763) (Desulfovibrio salexigens)).